The sequence spans 163 residues: NADH-quinone oxidoreductase subunit I (163 aa).

2 4Fe-4S ferredoxin-type domains span residues 54 to 84 and 94 to 123; these read LRRY…IESE and IVYD…ETQI. The [4Fe-4S] cluster site is built by cysteine 64, cysteine 67, cysteine 70, cysteine 74, cysteine 103, cysteine 106, cysteine 109, and cysteine 113.

It belongs to the complex I 23 kDa subunit family. NDH-1 is composed of 14 different subunits. Subunits NuoA, H, J, K, L, M, N constitute the membrane sector of the complex. Requires [4Fe-4S] cluster as cofactor.

Its subcellular location is the cell inner membrane. The enzyme catalyses a quinone + NADH + 5 H(+)(in) = a quinol + NAD(+) + 4 H(+)(out). Functionally, NDH-1 shuttles electrons from NADH, via FMN and iron-sulfur (Fe-S) centers, to quinones in the respiratory chain. The immediate electron acceptor for the enzyme in this species is believed to be ubiquinone. Couples the redox reaction to proton translocation (for every two electrons transferred, four hydrogen ions are translocated across the cytoplasmic membrane), and thus conserves the redox energy in a proton gradient. The chain is NADH-quinone oxidoreductase subunit I from Ruthia magnifica subsp. Calyptogena magnifica.